Reading from the N-terminus, the 227-residue chain is Cytochrome c oxidase subunit 2 (227 aa).

Residues M1–S14 are Mitochondrial intermembrane-facing. A helical transmembrane segment spans residues P15–T45. Over L46–Q59 the chain is Mitochondrial matrix. Residues E60–T87 traverse the membrane as a helical segment. Residues D88–L227 lie on the Mitochondrial intermembrane side of the membrane. The Cu cation site is built by H161, C196, E198, C200, H204, and M207. E198 provides a ligand contact to Mg(2+).

Belongs to the cytochrome c oxidase subunit 2 family. As to quaternary structure, component of the cytochrome c oxidase (complex IV, CIV), a multisubunit enzyme composed of 14 subunits. The complex is composed of a catalytic core of 3 subunits MT-CO1, MT-CO2 and MT-CO3, encoded in the mitochondrial DNA, and 11 supernumerary subunits COX4I, COX5A, COX5B, COX6A, COX6B, COX6C, COX7A, COX7B, COX7C, COX8 and NDUFA4, which are encoded in the nuclear genome. The complex exists as a monomer or a dimer and forms supercomplexes (SCs) in the inner mitochondrial membrane with NADH-ubiquinone oxidoreductase (complex I, CI) and ubiquinol-cytochrome c oxidoreductase (cytochrome b-c1 complex, complex III, CIII), resulting in different assemblies (supercomplex SCI(1)III(2)IV(1) and megacomplex MCI(2)III(2)IV(2)). Found in a complex with TMEM177, COA6, COX18, COX20, SCO1 and SCO2. Interacts with TMEM177 in a COX20-dependent manner. Interacts with COX20. Interacts with COX16. Cu cation serves as cofactor.

The protein localises to the mitochondrion inner membrane. It catalyses the reaction 4 Fe(II)-[cytochrome c] + O2 + 8 H(+)(in) = 4 Fe(III)-[cytochrome c] + 2 H2O + 4 H(+)(out). In terms of biological role, component of the cytochrome c oxidase, the last enzyme in the mitochondrial electron transport chain which drives oxidative phosphorylation. The respiratory chain contains 3 multisubunit complexes succinate dehydrogenase (complex II, CII), ubiquinol-cytochrome c oxidoreductase (cytochrome b-c1 complex, complex III, CIII) and cytochrome c oxidase (complex IV, CIV), that cooperate to transfer electrons derived from NADH and succinate to molecular oxygen, creating an electrochemical gradient over the inner membrane that drives transmembrane transport and the ATP synthase. Cytochrome c oxidase is the component of the respiratory chain that catalyzes the reduction of oxygen to water. Electrons originating from reduced cytochrome c in the intermembrane space (IMS) are transferred via the dinuclear copper A center (CU(A)) of subunit 2 and heme A of subunit 1 to the active site in subunit 1, a binuclear center (BNC) formed by heme A3 and copper B (CU(B)). The BNC reduces molecular oxygen to 2 water molecules using 4 electrons from cytochrome c in the IMS and 4 protons from the mitochondrial matrix. This is Cytochrome c oxidase subunit 2 (MT-CO2) from Pan paniscus (Pygmy chimpanzee).